We begin with the raw amino-acid sequence, 369 residues long: Cobalt-precorrin-5B C(1)-methyltransferase (369 aa).

Belongs to the CbiD family.

The enzyme catalyses Co-precorrin-5B + S-adenosyl-L-methionine = Co-precorrin-6A + S-adenosyl-L-homocysteine. It functions in the pathway cofactor biosynthesis; adenosylcobalamin biosynthesis; cob(II)yrinate a,c-diamide from sirohydrochlorin (anaerobic route): step 6/10. Functionally, catalyzes the methylation of C-1 in cobalt-precorrin-5B to form cobalt-precorrin-6A. The protein is Cobalt-precorrin-5B C(1)-methyltransferase of Brucella melitensis biotype 1 (strain ATCC 23456 / CCUG 17765 / NCTC 10094 / 16M).